The chain runs to 362 residues: MLRFPHVCGLCLLLKYWQILALAPFRTSEPMVARCQRWMTLIAVFRWLLLTSMAPFVLWKSAAMYEATNVRHSMVFKTIALATMTGDVCISLALLGNHLWNRRELANLVNDLARLHRRRRLSWWSTLFLWLKLLLSLYDLLCSVPFLKGAGGRLPWSQLVAYGVQLYFQHVASVYGNGIFGGILLMLECYNQLEREEPTNLARLLQKEYSWLRLIQRFVKLFQLGIFLLVLGSFVNIMVNIYAFMSYYVSLHGVPLTISNNCLVLAIQLYAVILAAHLCQVRSAKLRKKCLQLEYVPEGLTQEQAMASTPFPVLTPTGNVKFRILGVFILDNSFWLFLVSYAMNFIVVILQTSFEHINHGEI.

Residues 1–38 lie on the Cytoplasmic side of the membrane; that stretch reads MLRFPHVCGLCLLLKYWQILALAPFRTSEPMVARCQRW. A helical transmembrane segment spans residues 39–59; it reads MTLIAVFRWLLLTSMAPFVLW. The Extracellular portion of the chain corresponds to 60 to 74; that stretch reads KSAAMYEATNVRHSM. The helical transmembrane segment at 75–95 threads the bilayer; the sequence is VFKTIALATMTGDVCISLALL. At 96 to 126 the chain is on the cytoplasmic side; sequence GNHLWNRRELANLVNDLARLHRRRRLSWWST. Residues 127–147 form a helical membrane-spanning segment; the sequence is LFLWLKLLLSLYDLLCSVPFL. Residues 148-166 lie on the Extracellular side of the membrane; it reads KGAGGRLPWSQLVAYGVQL. The helical transmembrane segment at 167–187 threads the bilayer; the sequence is YFQHVASVYGNGIFGGILLML. The Cytoplasmic portion of the chain corresponds to 188-223; it reads ECYNQLEREEPTNLARLLQKEYSWLRLIQRFVKLFQ. Residues 224 to 244 form a helical membrane-spanning segment; the sequence is LGIFLLVLGSFVNIMVNIYAF. Residues 245–255 are Extracellular-facing; the sequence is MSYYVSLHGVP. The chain crosses the membrane as a helical span at residues 256–276; sequence LTISNNCLVLAIQLYAVILAA. The Cytoplasmic portion of the chain corresponds to 277-333; that stretch reads HLCQVRSAKLRKKCLQLEYVPEGLTQEQAMASTPFPVLTPTGNVKFRILGVFILDNS. A helical transmembrane segment spans residues 334–354; that stretch reads FWLFLVSYAMNFIVVILQTSF. Residues 355–362 lie on the Extracellular side of the membrane; it reads EHINHGEI.

Belongs to the insect chemoreceptor superfamily. Gustatory receptor (GR) family. Gr77a subfamily.

The protein resides in the cell membrane. Probable gustatory receptor which mediates acceptance or avoidance behavior, depending on its substrates. This chain is Putative gustatory receptor 89a (Gr89a), found in Drosophila melanogaster (Fruit fly).